The sequence spans 384 residues: 8-amino-7-oxononanoate synthase (384 aa).

A substrate-binding site is contributed by R21. Pyridoxal 5'-phosphate is bound at residue 108–109 (GF). H133 contacts substrate. S179, H207, and T233 together coordinate pyridoxal 5'-phosphate. K236 is subject to N6-(pyridoxal phosphate)lysine. Position 352 (T352) interacts with substrate.

This sequence belongs to the class-II pyridoxal-phosphate-dependent aminotransferase family. BioF subfamily. As to quaternary structure, homodimer. Requires pyridoxal 5'-phosphate as cofactor.

The enzyme catalyses 6-carboxyhexanoyl-[ACP] + L-alanine + H(+) = (8S)-8-amino-7-oxononanoate + holo-[ACP] + CO2. It participates in cofactor biosynthesis; biotin biosynthesis. Catalyzes the decarboxylative condensation of pimeloyl-[acyl-carrier protein] and L-alanine to produce 8-amino-7-oxononanoate (AON), [acyl-carrier protein], and carbon dioxide. This Shigella flexneri serotype 5b (strain 8401) protein is 8-amino-7-oxononanoate synthase.